A 1443-amino-acid chain; its full sequence is Cleavage and polyadenylation specificity factor subunit 1 (1443 aa).

4 disordered regions span residues Pro-404–Lys-435, Glu-546–Arg-570, Gly-715–Phe-777, and Phe-901–Gly-921. Residues Glu-410 to Ser-419 show a composition bias toward basic and acidic residues. Phosphoserine occurs at positions 756 and 766. A compositionally biased stretch (basic and acidic residues) spans Ser-758 to Ala-775. Residues Lys-893 to Pro-908 carry the Nuclear localization signal motif.

This sequence belongs to the CPSF1 family. As to quaternary structure, component of the cleavage and polyadenylation specificity factor (CPSF) complex, composed of CPSF1, CPSF2, CPSF3, CPSF4 and FIP1L1. Found in a complex with CPSF1, FIP1L1 and PAPOLA. Interacts with FIP1L1, TENT2/GLD2 and SRRM1. Interacts with TUT1; the interaction is direct and mediates the recruitment of the CPSF complex on the 3'UTR of selected pre-mRNAs. In terms of processing, the N-terminus is blocked. Widely expressed, with high expression in the retina.

Its subcellular location is the nucleus. It is found in the nucleoplasm. Functionally, component of the cleavage and polyadenylation specificity factor (CPSF) complex that plays a key role in pre-mRNA 3'-end formation, recognizing the AAUAAA signal sequence and interacting with poly(A) polymerase and other factors to bring about cleavage and poly(A) addition. This subunit is involved in the RNA recognition step of the polyadenylation reaction. May play a role in eye morphogenesis and the development of retinal ganglion cell projections to the midbrain. The polypeptide is Cleavage and polyadenylation specificity factor subunit 1 (CPSF1) (Homo sapiens (Human)).